Consider the following 142-residue polypeptide: Large ribosomal subunit protein bL19 (142 aa).

The protein belongs to the bacterial ribosomal protein bL19 family.

This protein is located at the 30S-50S ribosomal subunit interface and may play a role in the structure and function of the aminoacyl-tRNA binding site. The sequence is that of Large ribosomal subunit protein bL19 from Rickettsia bellii (strain OSU 85-389).